A 395-amino-acid polypeptide reads, in one-letter code: Enoyl-[acyl-carrier-protein] reductase [NADH] (395 aa).

NAD(+) contacts are provided by residues 48-53 (GASTGY), 74-75 (FE), 111-112 (DA), and 139-140 (LA). Position 225 (tyrosine 225) interacts with substrate. Residue tyrosine 235 is the Proton donor of the active site. NAD(+) contacts are provided by residues lysine 244 and 273-275 (LVT).

It belongs to the TER reductase family. In terms of assembly, monomer.

It catalyses the reaction a 2,3-saturated acyl-[ACP] + NAD(+) = a (2E)-enoyl-[ACP] + NADH + H(+). It participates in lipid metabolism; fatty acid biosynthesis. Involved in the final reduction of the elongation cycle of fatty acid synthesis (FAS II). Catalyzes the reduction of a carbon-carbon double bond in an enoyl moiety that is covalently linked to an acyl carrier protein (ACP). The protein is Enoyl-[acyl-carrier-protein] reductase [NADH] of Saccharophagus degradans (strain 2-40 / ATCC 43961 / DSM 17024).